The primary structure comprises 525 residues: Sterol O-acyltransferase 2 (525 aa).

2 disordered regions span residues 1-34 and 77-97; these read MQPK…THGT and QDRP…ELHP. Over 1 to 119 the chain is Cytoplasmic; it reads MQPKVPQLRR…IDELMEVQHF (119 aa). The segment covering 9-23 has biased composition (basic and acidic residues); that stretch reads RRREGLGEEQEKGAR. A cholesterol-binding site is contributed by histidine 118. A helical membrane pass occupies residues 120 to 141; it reads RTIYHMFIAGLCVLIISTLAID. At 142-161 the chain is on the lumenal side; it reads FIDEGRLMLEFDLLLFSFGQ. A helical transmembrane segment spans residues 162 to 187; the sequence is LPLALMTWVPMFLSTLLVPYQTLWLW. The Cytoplasmic portion of the chain corresponds to 188–199; that stretch reads ARPRAGGAWMLG. The chain crosses the membrane as a helical span at residues 200-223; that stretch reads ASLGCVLLAAHAVVLCVLPVHVSV. Residues 224 to 231 are Lumenal-facing; it reads RHELPPAS. The helical transmembrane segment at 232 to 255 threads the bilayer; that stretch reads RCVLVFEQVRLLMKSYSFLRETVP. Over 256–296 the chain is Cytoplasmic; that stretch reads GIFCVRGGKGISPPSFSSYLYFLFCPTLIYRETYPRTPSIR. Cysteine 280 carries the cysteine sulfenic acid (-SOH); alternate modification. Cysteine 280 is covalently cross-linked (Glycyl cysteine thioester (Cys-Gly) (interchain with G-Cter in ubiquitin); alternate). Residues 297 to 329 traverse the membrane as a helical segment; that stretch reads WNYVAKNFAQVLGCLLYACFILGRLCVPVFANM. Topologically, residues 330–346 are lumenal; that stretch reads SREPFSTRALLLSILHA. The chain crosses the membrane as a helical span at residues 347 to 372; sequence TGPGIFMLLLIFFAFLHCWLNAFAEM. Topologically, residues 373–420 are cytoplasmic; the sequence is LRFGDRMFYRDWWNSTSFSNYYRTWNVVVHDWLYSYVYQDGLWLLGRR. The FYXDWWN motif motif lies at 380 to 386; the sequence is FYRDWWN. Residues asparagine 392, arginine 395, asparagine 398, histidine 402, tyrosine 410, and serine 433 each contribute to the an acyl-CoA site. A helical transmembrane segment spans residues 421–445; it reads ARGVAMLGVFLVSAVVHEYIFCFVL. Residue histidine 437 is part of the active site. The Lumenal portion of the chain corresponds to 446 to 451; the sequence is GFFYPV. A helical transmembrane segment spans residues 452–467; sequence MLMLFLVFGGLLNFTM. Over 468 to 473 the chain is Cytoplasmic; it reads NDRHTG. Residues 474 to 505 form a helical membrane-spanning segment; the sequence is PAWNILMWTFLFMGQGIQVSLYCQEWYARRHC. At 506-525 the chain is on the lumenal side; the sequence is PLPQTTFWGMVTPRSWSCHP.

Belongs to the membrane-bound acyltransferase family. Sterol o-acyltransferase subfamily. In terms of assembly, may form homo- or heterodimers. Interacts with INSIG1; the interaction is direct and promotes association with AMFR/gp78. Polyubiquitinated by AMFR/gp78 at Cys-280, leading to its degradation when the lipid levels are low. Association with AMFR/gp78 is mediated via interaction with INSIG1. High concentration of cholesterol and fatty acid results in Cys-280 oxidation, preventing ubiquitination at the same site, resulting in protein stabilization. Post-translationally, oxidized at Cys-280: high concentration of cholesterol and fatty acid induce reactive oxygen species, which oxidizes Cys-280, preventing ubiquitination at the same site, and resulting in protein stabilization.

The protein resides in the endoplasmic reticulum membrane. The enzyme catalyses a sterol + a long-chain fatty acyl-CoA = a long-chain 3-hydroxysterol ester + CoA. It catalyses the reaction cholesterol + an acyl-CoA = a cholesterol ester + CoA. It carries out the reaction cholesterol + (9Z)-octadecenoyl-CoA = cholesteryl (9Z-octadecenoate) + CoA. The catalysed reaction is (5Z,8Z,11Z,14Z,17Z)-eicosapentaenoyl-CoA + cholesterol = (5Z,8Z,11Z,14Z,17Z-eicosapentaenoyl)-cholesterol + CoA. The enzyme catalyses (9Z,12Z,15Z)-octadecatrienoyl-CoA + cholesterol = (9Z,12Z,15Z-octadecatrienoyl)-cholesterol + CoA. It catalyses the reaction (5Z,8Z,11Z,14Z)-eicosatetraenoyl-CoA + cholesterol = cholesteryl (5Z,8Z,11Z,14Z)-eicosatetraenoate + CoA. Functionally, catalyzes the formation of fatty acid-cholesterol esters, which are less soluble in membranes than cholesterol. Plays a role in lipoprotein assembly and dietary cholesterol absorption. Utilizes oleoyl-CoA ((9Z)-octadecenoyl-CoA) and linolenoyl-CoA ((9Z,12Z,15Z)-octadecatrienoyl-CoA) as substrates. May provide cholesteryl esters for lipoprotein secretion from hepatocytes and intestinal mucosa. In Mus musculus (Mouse), this protein is Sterol O-acyltransferase 2.